An 83-amino-acid polypeptide reads, in one-letter code: MSGSTGERSFADIITSIRYWVIHSITIPSLFIAGWLFVSTGLAYDVFGSPRPNEYFTESRQGIPLITDRFDSLEQLDEFSRSF.

Residues 21–35 (VIHSITIPSLFIAGW) traverse the membrane as a helical segment. Position 23 (histidine 23) interacts with heme.

This sequence belongs to the PsbE/PsbF family. In terms of assembly, heterodimer of an alpha subunit and a beta subunit. PSII is composed of 1 copy each of membrane proteins PsbA, PsbB, PsbC, PsbD, PsbE, PsbF, PsbH, PsbI, PsbJ, PsbK, PsbL, PsbM, PsbT, PsbX, PsbY, PsbZ, Psb30/Ycf12, at least 3 peripheral proteins of the oxygen-evolving complex and a large number of cofactors. It forms dimeric complexes. Heme b serves as cofactor.

The protein resides in the plastid. The protein localises to the chloroplast thylakoid membrane. This b-type cytochrome is tightly associated with the reaction center of photosystem II (PSII). PSII is a light-driven water:plastoquinone oxidoreductase that uses light energy to abstract electrons from H(2)O, generating O(2) and a proton gradient subsequently used for ATP formation. It consists of a core antenna complex that captures photons, and an electron transfer chain that converts photonic excitation into a charge separation. The protein is Cytochrome b559 subunit alpha of Agrostis stolonifera (Creeping bentgrass).